The following is a 152-amino-acid chain: Protein-export protein SecB (152 aa).

It belongs to the SecB family. Homotetramer, a dimer of dimers. One homotetramer interacts with 1 SecA dimer.

Its subcellular location is the cytoplasm. One of the proteins required for the normal export of preproteins out of the cell cytoplasm. It is a molecular chaperone that binds to a subset of precursor proteins, maintaining them in a translocation-competent state. It also specifically binds to its receptor SecA. This is Protein-export protein SecB from Rickettsia africae (strain ESF-5).